The primary structure comprises 254 residues: Trans-aconitate 2-methyltransferase (254 aa).

The protein belongs to the methyltransferase superfamily. Tam family.

The protein localises to the cytoplasm. The enzyme catalyses trans-aconitate + S-adenosyl-L-methionine = (E)-3-(methoxycarbonyl)pent-2-enedioate + S-adenosyl-L-homocysteine. In terms of biological role, catalyzes the S-adenosylmethionine monomethyl esterification of trans-aconitate. The polypeptide is Trans-aconitate 2-methyltransferase (Mycobacterium sp. (strain JLS)).